We begin with the raw amino-acid sequence, 474 residues long: UDP-N-acetylmuramate--L-alanine ligase (474 aa).

115–121 (GTHGKTT) provides a ligand contact to ATP.

Belongs to the MurCDEF family.

The protein localises to the cytoplasm. The catalysed reaction is UDP-N-acetyl-alpha-D-muramate + L-alanine + ATP = UDP-N-acetyl-alpha-D-muramoyl-L-alanine + ADP + phosphate + H(+). Its pathway is cell wall biogenesis; peptidoglycan biosynthesis. Its function is as follows. Cell wall formation. This is UDP-N-acetylmuramate--L-alanine ligase from Novosphingobium aromaticivorans (strain ATCC 700278 / DSM 12444 / CCUG 56034 / CIP 105152 / NBRC 16084 / F199).